The following is a 30-amino-acid chain: MNPNCARCGKIVYPTEKVNCLDKFWHKACF.

The residue at position 1 (M1) is an N-acetylmethionine. In terms of domain architecture, LIM zinc-binding spans 5 to 30 (CARCGKIVYPTEKVNCLDKFWHKACF).

Interacts with F-actin. Interacts with ANKRD54. Interacts with KBTBD10. Phosphorylated.

It is found in the cytoplasm. The protein resides in the cell cortex. It localises to the cytoskeleton. Functionally, plays an important role in the regulation of dynamic actin-based, cytoskeletal activities. Agonist-dependent changes in LASP1 phosphorylation may also serve to regulate actin-associated ion transport activities, not only in the parietal cell but also in certain other F-actin-rich secretory epithelial cell types. The chain is LIM and SH3 domain protein 1 (LASP1) from Sus scrofa (Pig).